Reading from the N-terminus, the 175-residue chain is MGKMFSKIFGNKEMRILMRGLDAAGKTTILYKLKLGQSVTTIPTVGFNVETVTYKNVKFNVWDVGGQDKIRPLWRHYYTGTQGLIFVVDCPDRDRIDEARQELHRIINDREMRDAIILIFANKQDLPDAMKPHEIQEKLGLTRIRDRNWYVQPSCAASGDGLYEGLTWLTSNYKS.

Residue Gly2 is the site of N-myristoyl glycine attachment. Lys3 carries the N6-myristoyl lysine lipid modification. GTP is bound by residues 23-28 (AAGKTT), 41-44 (TIPT), 63-67 (DVGGQ), 122-125 (NKQD), and 155-156 (CA).

The protein belongs to the small GTPase superfamily. Arf family.

The protein localises to the cytoplasm. The protein resides in the cytosol. It is found in the cell membrane. It localises to the endosome membrane. Its subcellular location is the recycling endosome membrane. The protein localises to the cell projection. The protein resides in the filopodium membrane. It is found in the ruffle. It localises to the cleavage furrow. Its subcellular location is the midbody. The protein localises to the midbody ring. The protein resides in the golgi apparatus. The enzyme catalyses GTP + H2O = GDP + phosphate + H(+). GTP-binding protein involved in protein trafficking; regulates endocytic recycling and cytoskeleton remodeling. May modulate vesicle budding and uncoating within the Golgi apparatus. May contribute to the regulation of dendritic branching, filopodia extension and dendritic spine development. This chain is ADP-ribosylation factor 6 (arf6), found in Xenopus laevis (African clawed frog).